Reading from the N-terminus, the 297-residue chain is ER membrane protein complex subunit 2-A (297 aa).

3 TPR repeats span residues 87-120 (HRVKRLTGLRFEAMERYDDALQIYDRILQDDPTN), 155-188 (QEAWHELAELYINELDYAKAAFCLEELILTNPHN), and 192-225 (YQQFAEVKYTQGGLENLELSRKYFSQALKLNNHN).

Belongs to the EMC2 family. Component of the ER membrane protein complex (EMC).

It is found in the endoplasmic reticulum membrane. In terms of biological role, part of the endoplasmic reticulum membrane protein complex (EMC) that enables the energy-independent insertion into endoplasmic reticulum membranes of newly synthesized membrane proteins. Preferentially accommodates proteins with transmembrane domains that are weakly hydrophobic or contain destabilizing features such as charged and aromatic residues. Involved in the cotranslational insertion of multi-pass membrane proteins in which stop-transfer membrane-anchor sequences become ER membrane spanning helices. It is also required for the post-translational insertion of tail-anchored/TA proteins in endoplasmic reticulum membranes. By mediating the proper cotranslational insertion of N-terminal transmembrane domains in an N-exo topology, with translocated N-terminus in the lumen of the ER, controls the topology of multi-pass membrane proteins. By regulating the insertion of various proteins in membranes, it is indirectly involved in many cellular processes. This is ER membrane protein complex subunit 2-A (emc2-a) from Xenopus laevis (African clawed frog).